The following is a 531-amino-acid chain: MDVGADEFEQSLPLLQELVAGADFVGLDIEFTGLRSNLSRPQQISLFDLPSEWYLKTRQSVQQFTICQIGLSMFSSIEGESNKYVAHSCNFFLFPTTFGILDSEFSFQASSVQFLNQYGFDYNKFLKNGIPYMNEEQEKKIKHSILRGNWRVRSSLDKDQIKVVIDKVTQWLDLAEEGDQMTLPGIAGFQAFEVQLVLRQALPNIWTVLKEEWVIVKKVSQPQRWYLEHASCDQVSCWKEQILLSARGFSVFFQMLVKAQKPLVGHNMMMDLLHLHEKFFRPLPESYDQFKQNIHSLFPVLIDTKNVTKDIWKELRFPRVSNLLEVYEVLSSNLNPTKDSGPVIIHARQCKKYAETKCPHEAAYDAFLCGSVLLKVAHLLLQRVHGNGAVHEPAFPQYLDVLAPYVNQVNLIRAGVPKINFSGPDYPSIRPPVLILTVKRWPGVSEQQVYREFQNLCKFDVRRFTRSQFLLLTNKFKDARSVLKEYRNHPTLQVSLYRSWRHSPNITCLLQVCSIVTTWAMIAFLLGRPMP.

Asp-28, Glu-30, Asp-271, and Asp-365 together coordinate Mg(2+). A helical transmembrane segment spans residues 506–526 (ITCLLQVCSIVTTWAMIAFLL).

It belongs to the CAF1 family. It depends on Mg(2+) as a cofactor. In terms of tissue distribution, specifically expressed in embryonic stem cells. Highly expressed in testis.

The protein localises to the endoplasmic reticulum membrane. The enzyme catalyses Exonucleolytic cleavage of poly(A) to 5'-AMP.. 3'-exoribonuclease that has a preference for poly(A) tails of mRNAs, thereby efficiently degrading poly(A) tails. Exonucleolytic degradation of the poly(A) tail is often the first step in the decay of eukaryotic mRNAs and is also used to silence certain maternal mRNAs translationally during oocyte maturation and early embryonic development. May act as a regulator of multipotency in embryonic stem cells. Is a critical factor for proper spermatogenesis, involved in pre-piRNAs processing to generate mature piRNAs. This is Poly(A)-specific ribonuclease PNLDC1 from Mus musculus (Mouse).